The primary structure comprises 198 residues: Adenylate kinase (198 aa).

10–15 (GAGKGT) provides a ligand contact to ATP. The interval 30-59 (STGDMLRAAVQAGSEVGKRAKAVMDAGELV) is NMP. Residues Thr31, Arg36, 57–59 (ELV), 85–88 (GYPR), and Gln92 contribute to the AMP site. The segment at 126-142 (KRAEDAKAAGQPVRKDD) is LID. Arg127 is a binding site for ATP. Residues Arg139 and Arg150 each contribute to the AMP site. Ala178 is a binding site for ATP.

Belongs to the adenylate kinase family. In terms of assembly, monomer.

It is found in the cytoplasm. It catalyses the reaction AMP + ATP = 2 ADP. Its pathway is purine metabolism; AMP biosynthesis via salvage pathway; AMP from ADP: step 1/1. Functionally, catalyzes the reversible transfer of the terminal phosphate group between ATP and AMP. Plays an important role in cellular energy homeostasis and in adenine nucleotide metabolism. In Mesorhizobium japonicum (strain LMG 29417 / CECT 9101 / MAFF 303099) (Mesorhizobium loti (strain MAFF 303099)), this protein is Adenylate kinase.